Reading from the N-terminus, the 315-residue chain is Small ribosomal subunit biogenesis GTPase RsgA (315 aa).

The CP-type G domain maps to 82-246 (DQFKSKVLAA…LIDSPGFQEF (165 aa)). Residues 130-133 (NKID) and 184-192 (GQSGMGKSS) contribute to the GTP site. Zn(2+)-binding residues include cysteine 270, cysteine 275, histidine 277, and cysteine 283.

The protein belongs to the TRAFAC class YlqF/YawG GTPase family. RsgA subfamily. Monomer. Associates with 30S ribosomal subunit, binds 16S rRNA. Zn(2+) is required as a cofactor.

The protein localises to the cytoplasm. Functionally, one of several proteins that assist in the late maturation steps of the functional core of the 30S ribosomal subunit. Helps release RbfA from mature subunits. May play a role in the assembly of ribosomal proteins into the subunit. Circularly permuted GTPase that catalyzes slow GTP hydrolysis, GTPase activity is stimulated by the 30S ribosomal subunit. This chain is Small ribosomal subunit biogenesis GTPase RsgA, found in Ralstonia pickettii (strain 12J).